The sequence spans 905 residues: Microtubule-associated protein 10 (905 aa).

Disordered stretches follow at residues 30 to 51 (AAAV…SSPR), 199 to 235 (TRTG…KPLG), 329 to 362 (APEE…AHEH), 434 to 458 (SPES…GGCE), 547 to 586 (SSAE…FDEP), 721 to 772 (RSFK…GSPV), and 786 to 855 (KSLE…SSYL). Residues 34–43 (EQEEEEEEKE) show a composition bias toward acidic residues. Over residues 208–227 (SPQTQQERQQLQQPASQPSP) the composition is skewed to low complexity. Over residues 443–453 (CRSEAKKDKRS) the composition is skewed to basic and acidic residues. Over residues 567–579 (ASFTENSDTSRQI) the composition is skewed to polar residues. Positions 721–736 (RSFKAHDSSSRTENPK) are enriched in basic and acidic residues. The segment covering 737-748 (HSQYTSKSSDTG) has biased composition (polar residues). The segment covering 790–801 (EASSISASDLSS) has biased composition (low complexity). A compositionally biased stretch (polar residues) spans 830 to 855 (SVKTRSSWKSLEKSQSPQTSQVSSYL).

Interacts (via middle region) with microtubules. As to expression, expressed in different cell lines (at protein level).

The protein localises to the cytoplasm. The protein resides in the cytoskeleton. It localises to the spindle pole. It is found in the microtubule organizing center. Its subcellular location is the centrosome. The protein localises to the midbody. Its function is as follows. Microtubule-associated protein (MAP) that plays a role in the regulation of cell division; promotes microtubule stability and participates in the organization of the spindle midzone and normal progress of cytokinesis. In Homo sapiens (Human), this protein is Microtubule-associated protein 10 (MAP10).